Reading from the N-terminus, the 968-residue chain is uncharacterized protein (968 aa).

Disordered regions lie at residues 124–177 (SSIS…FSFP), 348–437 (QEDS…VNDS), 572–595 (TTTT…QQNT), 608–627 (PKAS…GSSK), and 837–877 (KASK…KKGK). Over residues 131-157 (TIESNYLSNPSSPCQSTPILESSTPFS) the composition is skewed to polar residues. Composition is skewed to low complexity over residues 158–177 (QKLM…FSFP), 352–431 (NNNN…NCNN), and 572–593 (TTTT…QQQQ). The segment covering 841–857 (DSSSSPTASSAAPGDSS) has biased composition (low complexity).

This is an uncharacterized protein from Dictyostelium discoideum (Social amoeba).